We begin with the raw amino-acid sequence, 299 residues long: 33 kDa chaperonin (299 aa).

Disulfide bonds link Cys-234–Cys-236 and Cys-268–Cys-271.

This sequence belongs to the HSP33 family. In terms of processing, under oxidizing conditions two disulfide bonds are formed involving the reactive cysteines. Under reducing conditions zinc is bound to the reactive cysteines and the protein is inactive.

Its subcellular location is the cytoplasm. Its function is as follows. Redox regulated molecular chaperone. Protects both thermally unfolding and oxidatively damaged proteins from irreversible aggregation. Plays an important role in the bacterial defense system toward oxidative stress. The polypeptide is 33 kDa chaperonin (Pseudomonas putida (strain ATCC 47054 / DSM 6125 / CFBP 8728 / NCIMB 11950 / KT2440)).